The chain runs to 497 residues: uncharacterized protein (497 aa).

The tract at residues 58 to 79 (ISTRSFRNDGNDSDPQTLDPDA) is disordered. The next 12 membrane-spanning stretches (helical) occupy residues 86–106 (IAFV…ALPI), 120–140 (FSGL…YPML), 155–175 (FRPL…YSLA), 180–200 (WLYL…MFLY), 222–242 (LNIL…GLLA), 258–278 (VGSW…SIFF), 309–329 (FMLV…AGYQ), 348–368 (GNFL…STFL), 378–398 (MLYG…LDVL), 407–427 (FVLY…LISL), 438–458 (ILVG…GAIC), and 468–488 (VGFI…LLFL).

This sequence belongs to the major facilitator superfamily.

The protein resides in the membrane. This is an uncharacterized protein from Schizosaccharomyces pombe (strain 972 / ATCC 24843) (Fission yeast).